The chain runs to 212 residues: DNA-directed RNA polymerase III subunit RPC8 (212 aa).

Phosphoserine is present on S162. A compositionally biased stretch (basic and acidic residues) spans 166-184 (RELEERAQLENEIEGKNEE). Residues 166–194 (RELEERAQLENEIEGKNEETPQNEKPPAY) form a disordered region.

Belongs to the eukaryotic RPB7/RPC8 RNA polymerase subunit family. In terms of assembly, component of the RNA polymerase III (Pol III) complex consisting of 17 subunits. RPC25/RPC8 and RPC17/RPC9 form a Pol III subcomplex.

It localises to the nucleus. DNA-dependent RNA polymerase catalyzes the transcription of DNA into RNA using the four ribonucleoside triphosphates as substrates. Specific peripheric component of RNA polymerase III which synthesizes small RNAs, such as 5S rRNA and tRNA. The RPC25/RPC8-RPC17/RPC9 subcomplex may bind Pol III transcripts emerging from the adjacent exit pore during elongation. This is DNA-directed RNA polymerase III subunit RPC8 (RPC25) from Saccharomyces cerevisiae (strain ATCC 204508 / S288c) (Baker's yeast).